Here is a 305-residue protein sequence, read N- to C-terminus: Alpha-N-acetylgalactosaminide alpha-2,6-sialyltransferase 3 (305 aa).

Over Met-1–Lys-8 the chain is Cytoplasmic. Residues Pro-9–Val-28 form a helical; Signal-anchor for type II membrane protein membrane-spanning segment. Over Asn-29–Ser-305 the chain is Lumenal. An intrachain disulfide couples Cys-80 to Cys-229. N-linked (GlcNAc...) asparagine glycosylation is found at Asn-239 and Asn-301.

It belongs to the glycosyltransferase 29 family. In terms of tissue distribution, in adult tissues, high expression in brain, lung and heart and to a lesser extent in kidney, mammary gland, spleen, testis and thymus.

The protein resides in the golgi apparatus membrane. The enzyme catalyses an alpha-Neu5Ac-(2-&gt;3)-beta-D-Gal-(1-&gt;3)-D-GlcNAc derivative + CMP-N-acetyl-beta-neuraminate = an alpha-Neu5Ac-(2-&gt;3)-beta-D-Gal-(1-&gt;3)-[alpha-Neu5Ac-(2-&gt;6)]-D-GlcNAc derivative + CMP + H(+). The catalysed reaction is a ganglioside GM1b (d18:1(4E)) + CMP-N-acetyl-beta-neuraminate = a ganglioside GD1alpha (d18:1(4E)) + CMP + H(+). It carries out the reaction a globoside MSGG + CMP-N-acetyl-beta-neuraminate = a globoside DSGG + CMP + H(+). It catalyses the reaction 3-O-[alpha-Neu5Ac-(2-&gt;3)-beta-D-Gal-(1-&gt;3)-alpha-D-GalNAc]-L-Ser-[protein] + CMP-N-acetyl-beta-neuraminate = a 3-O-{alpha-Neu5Ac-(2-&gt;3)-beta-D-Gal-(1-&gt;3)-[alpha-Neu5Ac-(2-&gt;6)]-alpha-D-GalNAc}-L-seryl-[protein] + CMP + H(+). The enzyme catalyses 3-O-[alpha-Neu5Ac-(2-&gt;3)-beta-D-Gal-(1-&gt;3)-alpha-D-GalNAc]-L-Thr-[protein] + CMP-N-acetyl-beta-neuraminate = a 3-O-{alpha-Neu5Ac-(2-&gt;3)-beta-D-Gal-(1-&gt;3)-[alpha-Neu5Ac-(2-&gt;6)]-alpha-D-GalNAc}-L-threonyl-[protein] + CMP + H(+). Its pathway is protein modification; protein glycosylation. It participates in glycolipid biosynthesis. In terms of biological role, transfers the sialyl group (N-acetyl-alpha-neuraminyl or NeuAc) from CMP-NeuAc to the GalNAc residue on the NeuAc-alpha-2,3-Gal-beta-1,3-GalNAc sequence of glycoproteins and glycolipids forming an alpha-2,6-linkage. Produces branched type disialyl structures by transfer of a sialyl group onto a GalNAc residue inside the backbone core chains. ST6GalNAcIII prefers glycolipids to glycoproteins, predominantly catalyzing the biosynthesis of ganglioside GD1alpha from GM1b. GD1alpha is a critical molecule in the communication and interaction between neuronal cells and their supportive cells, particularly in brain tissues, and functions as an adhesion molecule in the process of metastasis. Sialylation of glycoproteins or glycosphingolipids is very important in tumor development, neuronal development, nerve repair, immunological processes and regulation of hormone sensitivity. The chain is Alpha-N-acetylgalactosaminide alpha-2,6-sialyltransferase 3 (St6galnac3) from Mus musculus (Mouse).